The chain runs to 375 residues: Carbamoyl phosphate synthase small chain (375 aa).

The CPSase stretch occupies residues 1 to 185; the sequence is MTQPAILVLE…LNANAFVQAE (185 aa). 3 residues coordinate L-glutamine: serine 47, glycine 237, and glycine 239. Residues 189–375 form the Glutamine amidotransferase type-1 domain; that stretch reads KVVAYDYGVK…FVASMAEAKS (187 aa). Catalysis depends on cysteine 265, which acts as the Nucleophile. The L-glutamine site is built by leucine 266, glutamine 269, asparagine 307, glycine 309, and phenylalanine 310. Catalysis depends on residues histidine 349 and glutamate 351.

It belongs to the CarA family. In terms of assembly, composed of two chains; the small (or glutamine) chain promotes the hydrolysis of glutamine to ammonia, which is used by the large (or ammonia) chain to synthesize carbamoyl phosphate. Tetramer of heterodimers (alpha,beta)4.

The enzyme catalyses hydrogencarbonate + L-glutamine + 2 ATP + H2O = carbamoyl phosphate + L-glutamate + 2 ADP + phosphate + 2 H(+). It catalyses the reaction L-glutamine + H2O = L-glutamate + NH4(+). The protein operates within amino-acid biosynthesis; L-arginine biosynthesis; carbamoyl phosphate from bicarbonate: step 1/1. It functions in the pathway pyrimidine metabolism; UMP biosynthesis via de novo pathway; (S)-dihydroorotate from bicarbonate: step 1/3. In terms of biological role, small subunit of the glutamine-dependent carbamoyl phosphate synthetase (CPSase). CPSase catalyzes the formation of carbamoyl phosphate from the ammonia moiety of glutamine, carbonate, and phosphate donated by ATP, constituting the first step of 2 biosynthetic pathways, one leading to arginine and/or urea and the other to pyrimidine nucleotides. The small subunit (glutamine amidotransferase) binds and cleaves glutamine to supply the large subunit with the substrate ammonia. This Xanthomonas campestris pv. campestris (strain ATCC 33913 / DSM 3586 / NCPPB 528 / LMG 568 / P 25) protein is Carbamoyl phosphate synthase small chain.